We begin with the raw amino-acid sequence, 218 residues long: Pyridoxine/pyridoxamine 5'-phosphate oxidase (218 aa).

Residues 14-17 (RREY) and lysine 72 contribute to the substrate site. Residues 67–72 (RIVLLK), 82–83 (YT), arginine 88, lysine 89, and glutamine 111 contribute to the FMN site. Residues tyrosine 129, arginine 133, and serine 137 each coordinate substrate. Residues 146–147 (QS) and tryptophan 191 contribute to the FMN site. 197 to 199 (RLH) contacts substrate. An FMN-binding site is contributed by arginine 201.

It belongs to the pyridoxamine 5'-phosphate oxidase family. As to quaternary structure, homodimer. The cofactor is FMN.

The enzyme catalyses pyridoxamine 5'-phosphate + O2 + H2O = pyridoxal 5'-phosphate + H2O2 + NH4(+). It carries out the reaction pyridoxine 5'-phosphate + O2 = pyridoxal 5'-phosphate + H2O2. It functions in the pathway cofactor metabolism; pyridoxal 5'-phosphate salvage; pyridoxal 5'-phosphate from pyridoxamine 5'-phosphate: step 1/1. It participates in cofactor metabolism; pyridoxal 5'-phosphate salvage; pyridoxal 5'-phosphate from pyridoxine 5'-phosphate: step 1/1. Catalyzes the oxidation of either pyridoxine 5'-phosphate (PNP) or pyridoxamine 5'-phosphate (PMP) into pyridoxal 5'-phosphate (PLP). The sequence is that of Pyridoxine/pyridoxamine 5'-phosphate oxidase from Escherichia coli O127:H6 (strain E2348/69 / EPEC).